The primary structure comprises 85 residues: Alpha-toxin BmalphaTx47 (85 aa).

The signal sequence occupies residues 1 to 19 (MNYLIVISFALLLMTGVQS). One can recognise an LCN-type CS-alpha/beta domain in the interval 21-83 (RDAYIADSEN…VPIRISGSCR (63 aa)). 4 disulfides stabilise this stretch: cysteine 31–cysteine 82, cysteine 35–cysteine 55, cysteine 41–cysteine 65, and cysteine 45–cysteine 67.

Belongs to the long (4 C-C) scorpion toxin superfamily. Sodium channel inhibitor family. Alpha subfamily. In terms of tissue distribution, expressed by the venom gland.

Its subcellular location is the secreted. Alpha toxins bind voltage-independently at site-3 of sodium channels (Nav) and inhibit the inactivation of the activated channels, thereby blocking neuronal transmission. This toxin expressed with the pET-14b vector has low inhibitory activity on sodium channels (11.33% on rNav1.2/SCN2A, 15.96% on mNav1.4/SCN4A and 5.04% on hNav1.5/SCN5A). When expressed with the pET-28a vector, this toxin has higher inhibitory activities (44.12% on rNav1.2/SCN2A, 25.40% on mNav1.4/SCN4A and 65.34% on hNav1.5/SCN5A). The sequence is that of Alpha-toxin BmalphaTx47 from Olivierus martensii (Manchurian scorpion).